A 77-amino-acid chain; its full sequence is Putative antitoxin VapB3 (77 aa).

Belongs to the UPF0330 family.

Possibly the antitoxin component of a type II toxin-antitoxin (TA) system. Its cognate toxin is VapC3 (Potential). This is Putative antitoxin VapB3 (vapB3) from Methanocaldococcus jannaschii (strain ATCC 43067 / DSM 2661 / JAL-1 / JCM 10045 / NBRC 100440) (Methanococcus jannaschii).